We begin with the raw amino-acid sequence, 85 residues long: Translation initiation factor IF-1 1 (85 aa).

Residues 1–72 (MAKEELIEMS…SKGRITFRHL (72 aa)) enclose the S1-like domain.

This sequence belongs to the IF-1 family. In terms of assembly, component of the 30S ribosomal translation pre-initiation complex which assembles on the 30S ribosome in the order IF-2 and IF-3, IF-1 and N-formylmethionyl-tRNA(fMet); mRNA recruitment can occur at any time during PIC assembly.

Its subcellular location is the cytoplasm. Its function is as follows. One of the essential components for the initiation of protein synthesis. Stabilizes the binding of IF-2 and IF-3 on the 30S subunit to which N-formylmethionyl-tRNA(fMet) subsequently binds. Helps modulate mRNA selection, yielding the 30S pre-initiation complex (PIC). Upon addition of the 50S ribosomal subunit IF-1, IF-2 and IF-3 are released leaving the mature 70S translation initiation complex. The polypeptide is Translation initiation factor IF-1 1 (Aromatoleum aromaticum (strain DSM 19018 / LMG 30748 / EbN1) (Azoarcus sp. (strain EbN1))).